A 241-amino-acid polypeptide reads, in one-letter code: Pyridoxine/pyridoxamine 5'-phosphate oxidase (241 aa).

Residues 1–35 (MASNPPSAASPRRTAVSPGADRPDGPDPAGQRQSY) are disordered. Residues 32 to 35 (RQSY) and Lys-92 each bind substrate. Residues 87 to 92 (RTVLLK), 102 to 103 (YT), Arg-108, Lys-109, and Gln-131 each bind FMN. Residues Tyr-149, Arg-153, and Ser-157 each coordinate substrate. Residues 166-167 (QS) and Trp-212 contribute to the FMN site. Residue 218–220 (RLH) participates in substrate binding. Arg-222 is a binding site for FMN.

It belongs to the pyridoxamine 5'-phosphate oxidase family. As to quaternary structure, homodimer. FMN is required as a cofactor.

It catalyses the reaction pyridoxamine 5'-phosphate + O2 + H2O = pyridoxal 5'-phosphate + H2O2 + NH4(+). The enzyme catalyses pyridoxine 5'-phosphate + O2 = pyridoxal 5'-phosphate + H2O2. It functions in the pathway cofactor metabolism; pyridoxal 5'-phosphate salvage; pyridoxal 5'-phosphate from pyridoxamine 5'-phosphate: step 1/1. It participates in cofactor metabolism; pyridoxal 5'-phosphate salvage; pyridoxal 5'-phosphate from pyridoxine 5'-phosphate: step 1/1. Its function is as follows. Catalyzes the oxidation of either pyridoxine 5'-phosphate (PNP) or pyridoxamine 5'-phosphate (PMP) into pyridoxal 5'-phosphate (PLP). This is Pyridoxine/pyridoxamine 5'-phosphate oxidase from Frankia alni (strain DSM 45986 / CECT 9034 / ACN14a).